The chain runs to 428 residues: Cell division cycle 20.6, cofactor of APC complex (428 aa).

WD repeat units follow at residues 106–145, 150–189, 193–230, 234–273, 282–324, 326–367, and 370–409; these read WFLT…TSKL, DENG…HVRT, GHES…SIIG, GHTE…SNPT, EHTA…CLNS, ETGS…KMAE, and GHTS…PKTT.

The protein belongs to the WD repeat CDC20/Fizzy family. In terms of assembly, the APC/C is composed of at least 11 subunits that stay tightly associated throughout the cell cycle.

The protein localises to the nucleus. It functions in the pathway protein modification; protein ubiquitination. In terms of biological role, component of the anaphase promoting complex/cyclosome (APC/C), a cell cycle-regulated E3 ubiquitin-protein ligase complex that controls progression through mitosis and the G1 phase of the cell cycle. The chain is Cell division cycle 20.6, cofactor of APC complex (CDC20-6) from Arabidopsis thaliana (Mouse-ear cress).